We begin with the raw amino-acid sequence, 366 residues long: Chorismate synthase (366 aa).

2 residues coordinate NADP(+): R48 and R54. FMN is bound by residues 125-127, 238-239, G278, 293-297, and R319; these read RSS, NA, and KPTSS.

The protein belongs to the chorismate synthase family. In terms of assembly, homotetramer. FMNH2 is required as a cofactor.

The catalysed reaction is 5-O-(1-carboxyvinyl)-3-phosphoshikimate = chorismate + phosphate. Its pathway is metabolic intermediate biosynthesis; chorismate biosynthesis; chorismate from D-erythrose 4-phosphate and phosphoenolpyruvate: step 7/7. Catalyzes the anti-1,4-elimination of the C-3 phosphate and the C-6 proR hydrogen from 5-enolpyruvylshikimate-3-phosphate (EPSP) to yield chorismate, which is the branch point compound that serves as the starting substrate for the three terminal pathways of aromatic amino acid biosynthesis. This reaction introduces a second double bond into the aromatic ring system. The chain is Chorismate synthase from Cellvibrio japonicus (strain Ueda107) (Pseudomonas fluorescens subsp. cellulosa).